The sequence spans 713 residues: KNR4/SMI1 homolog (713 aa).

4 disordered regions span residues 18-129, 255-274, 400-457, and 500-713; these read PDRY…VTRD, IFIN…SPVA, RHQM…SKPA, and EPLE…KGKK. A compositionally biased stretch (low complexity) spans 22–34; it reads ASQQRSSKASQSA. A compositionally biased stretch (polar residues) spans 35–65; it reads GANSQNRPLYNNDDNQSEMYQASSSYTGGYT. 2 stretches are compositionally biased toward low complexity: residues 66-81 and 88-103; these read NSPS…GAAA and SSRN…SSTS. Positions 260 to 270 are enriched in polar residues; the sequence is NAGSPNSSTPG. Basic and acidic residues predominate over residues 400 to 412; it reads RHQMQRREHERRQ. Over residues 413–429 the composition is skewed to low complexity; the sequence is AAAAAQQQQQQQQHHAQ. 2 stretches are compositionally biased toward basic and acidic residues: residues 507–605 and 613–662; these read EIKG…EEQK and AKAE…KIDE. Residues 663–686 are compositionally biased toward acidic residues; it reads ENGNAEEADEEADDDDEDDEEEGD. The segment covering 701–713 has biased composition (basic residues); the sequence is SKSKKKNKKKGKK.

This sequence belongs to the KNR4/SMI1 family.

The chain is KNR4/SMI1 homolog from Yarrowia lipolytica (strain CLIB 122 / E 150) (Yeast).